The primary structure comprises 746 residues: Exostosin-1 (746 aa).

The Cytoplasmic segment spans residues 1 to 7 (MQAKKRY). Residues 8–28 (FILLSAGSCLALLFYFGGLQF) traverse the membrane as a helical; Signal-anchor for type II membrane protein segment. The Lumenal portion of the chain corresponds to 29–746 (RASRSHSRRE…RKKYRDIERL (718 aa)). Residue N89 is glycosylated (N-linked (GlcNAc...) asparagine). 2 disulfides stabilise this stretch: C98/C103 and C109/C152. A protein is bound by residues L166 and Y203. Residues K267, K269, Y271, and R280 each contribute to the UDP site. The cysteines at positions 298 and 312 are disulfide-linked. H300 contributes to the a protein binding site. Positions 319 and 324 each coordinate UDP. N-linked (GlcNAc...) asparagine glycosylation occurs at N330. 2 disulfides stabilise this stretch: C334/C355 and C652/C704. UDP contacts are provided by R346 and E349.

The protein belongs to the glycosyltransferase 47 family. Part of the heparan sulfate polymerase, a dimeric complex composed of EXT1 and EXT2. Could also form homooligomeric complexes. Interacts with NDST1. Post-translationally, N-glycosylated.

It is found in the golgi apparatus membrane. The protein localises to the golgi apparatus. Its subcellular location is the cis-Golgi network membrane. The protein resides in the endoplasmic reticulum membrane. It carries out the reaction 3-O-{alpha-D-GlcNAc-[(1-&gt;4)-beta-D-GlcA-(1-&gt;4)-alpha-D-GlcNAc](n)-(1-&gt;4)-beta-D-GlcA-(1-&gt;3)-beta-D-Gal-(1-&gt;3)-beta-D-Gal-(1-&gt;4)-beta-D-Xyl}-L-seryl-[protein] + UDP-alpha-D-glucuronate = 3-O-{[(1-&gt;4)-beta-D-GlcA-(1-&gt;4)-alpha-D-GlcNAc](n+1)-(1-&gt;4)-beta-D-GlcA-(1-&gt;3)-beta-D-Gal-(1-&gt;3)-beta-D-Gal-(1-&gt;4)-beta-D-Xyl}-L-seryl-[protein] + UDP + H(+). The protein operates within protein modification; protein glycosylation. Glycosyltransferase forming with EXT2 the heterodimeric heparan sulfate polymerase which catalyzes the elongation of the heparan sulfate glycan backbone. Glycan backbone extension consists in the alternating transfer of (1-&gt;4)-beta-D-GlcA and (1-&gt;4)-alpha-D-GlcNAc residues from their respective UDP-sugar donors. Both EXT1 and EXT2 are required for the full activity of the polymerase since EXT1 bears the N-acetylglucosaminyl-proteoglycan 4-beta-glucuronosyltransferase activity within the complex while EXT2 carries the glucuronosyl-N-acetylglucosaminyl-proteoglycan 4-alpha-N-acetylglucosaminyltransferase activity. Heparan sulfate proteoglycans are ubiquitous components of the extracellular matrix and play an important role in tissue homeostasis and signaling. This chain is Exostosin-1 (EXT1), found in Papio anubis (Olive baboon).